Reading from the N-terminus, the 750-residue chain is Alpha-galactosidase C (750 aa).

The first 26 residues, 1 to 26, serve as a signal peptide directing secretion; it reads MFRSTATVAAATAMGLLTATGHGSLA. Asn58, Asn162, Asn186, Asn194, Asn366, Asn428, Asn432, and Asn453 each carry an N-linked (GlcNAc...) asparagine glycan. Asp511 functions as the Nucleophile in the catalytic mechanism. Asp573 functions as the Proton donor in the catalytic mechanism.

Belongs to the glycosyl hydrolase 36 family. As to quaternary structure, homotetramer. Mg(2+) is required as a cofactor. Requires NAD(+) as cofactor.

It is found in the secreted. It carries out the reaction Hydrolysis of terminal, non-reducing alpha-D-galactose residues in alpha-D-galactosides, including galactose oligosaccharides, galactomannans and galactolipids.. Hydrolyzes a variety of simple alpha-D-galactoside as well as more complex molecules such as oligosaccharides and polysaccharides. Active on paranitrophenyl-alpha-galactoside, raffinose, locust bean gum and gum guar. The chain is Alpha-galactosidase C (aglC) from Emericella nidulans (strain FGSC A4 / ATCC 38163 / CBS 112.46 / NRRL 194 / M139) (Aspergillus nidulans).